The following is a 331-amino-acid chain: Small ribosomal subunit protein uS2 (331 aa).

The protein belongs to the universal ribosomal protein uS2 family.

This Rhodopseudomonas palustris (strain BisB5) protein is Small ribosomal subunit protein uS2.